Consider the following 174-residue polypeptide: Cathepsin B-like cysteine proteinase 3 (174 aa).

Intrachain disulfides connect C22-C55 and C30-C42. Catalysis depends on residues H122 and N142.

Belongs to the peptidase C1 family.

Expression of the protease correlates with blood-feeding and suggests a role for the protease in blood digestion. The chain is Cathepsin B-like cysteine proteinase 3 (CP-3) from Ostertagia ostertagi (Brown stomach worm).